A 61-amino-acid polypeptide reads, in one-letter code: Beta-defensin 133 (61 aa).

The signal sequence occupies residues methionine 1–cysteine 23. Cystine bridges form between cysteine 31–cysteine 59 and cysteine 38–cysteine 52.

The protein belongs to the beta-defensin family.

Its subcellular location is the secreted. Its function is as follows. Has antibacterial activity. The polypeptide is Beta-defensin 133 (DEFB133) (Homo sapiens (Human)).